The sequence spans 324 residues: Ribosomal RNA small subunit methyltransferase H (324 aa).

S-adenosyl-L-methionine-binding positions include 47–49 (GGH), Asp-67, Leu-96, Asp-115, and Gln-122.

It belongs to the methyltransferase superfamily. RsmH family.

It is found in the cytoplasm. It carries out the reaction cytidine(1402) in 16S rRNA + S-adenosyl-L-methionine = N(4)-methylcytidine(1402) in 16S rRNA + S-adenosyl-L-homocysteine + H(+). Functionally, specifically methylates the N4 position of cytidine in position 1402 (C1402) of 16S rRNA. The protein is Ribosomal RNA small subunit methyltransferase H of Halorhodospira halophila (strain DSM 244 / SL1) (Ectothiorhodospira halophila (strain DSM 244 / SL1)).